The sequence spans 1452 residues: CLIP-associating protein 1 (1452 aa).

HEAT repeat units lie at residues 68 to 87, 88 to 124, and 163 to 200; these read LLGMDILSALVTRLQDRFRS, QIGTVLPSLMDRLGDAKDSVREQDQNLLIKIMEQASN, and LTLSKIVPHICNLLGDPNSQVRDAAINCLVEIYRHVGE. The segment at 239–299 is disordered; sequence KNFDDEDSVD…GTAKEGAGGV (61 aa). Over residues 253 to 267 the composition is skewed to low complexity; the sequence is SSASSSASSKAPQAA. HEAT repeat units follow at residues 407–442 and 443–479; these read HGAEAIMPTVFNLVPNSAKIMATSGVVAIRLIIRQT and HVPRLIPIITSNCTSKSVAVRRRCYEFLDLLLQEWQT. 2 disordered regions span residues 545–735 and 771–792; these read SDSI…GISQ and YGMYSDDDANSDASSACSERSY. Residues 550–569 show a composition bias toward low complexity; that stretch reads SLPQSDRSSSSSQESLNRPL. A compositionally biased stretch (polar residues) spans 573 to 597; that stretch reads RSPTGSTVSRASTATSKSTPGSLQR. Composition is skewed to low complexity over residues 606-621, 645-659, and 668-682; these read AATCAKSKATSGASAA, QSSGSTTSTASTPAD, and VVSQSQPGSRSSSPG. Residues 715–724 are compositionally biased toward polar residues; the sequence is QGCSRETSPS. Positions 781-792 are enriched in low complexity; sequence SDASSACSERSY. The HEAT 6 repeat unit spans residues 926-963; it reads QQFNILMRFIVDQTQTPNLKVKVAILKYIESLARQMDP. Residues 1033 to 1076 are disordered; sequence LKNSSNSSMGSPSNTIGRTPSRHSSSRASPLTSPTNCSHGGLSP. Residues 1034–1046 show a composition bias toward low complexity; it reads KNSSNSSMGSPSN. The span at 1058–1070 shows a compositional bias: polar residues; the sequence is SRASPLTSPTNCS. 2 HEAT repeats span residues 1256 to 1293 and 1374 to 1411; these read EHFKTILLLLLETLGDKDHAIRALALRVLREILRNQPA and QILPDIIPGLLQGYDNTESSVRKASVFCLVAIYSVIGE.

It belongs to the CLASP family. In terms of assembly, interacts (via C-terminus) with clip1/clip-170, and cenpe.

The protein resides in the cytoplasm. It is found in the cytoskeleton. Its subcellular location is the microtubule organizing center. It localises to the centrosome. The protein localises to the chromosome. The protein resides in the centromere. It is found in the kinetochore. Its subcellular location is the spindle. It localises to the golgi apparatus. The protein localises to the trans-Golgi network. In terms of biological role, microtubule plus-end tracking protein that promotes the stabilization of dynamic microtubules during anaphase. Plays a crucial role in chromatin-induced microtubule formation. May also act at microtubule minus ends. May be involved in the nucleation of noncentrosomal microtubules originating from the trans-Golgi network (TGN). The chain is CLIP-associating protein 1 from Xenopus tropicalis (Western clawed frog).